Reading from the N-terminus, the 921-residue chain is Isoleucine--tRNA ligase 1 (921 aa).

The short motif at 57–67 is the 'HIGH' region element; that stretch reads PYANGDIHMGH. Residue Glu-552 coordinates L-isoleucyl-5'-AMP. The short motif at 593-597 is the 'KMSKS' region element; the sequence is KMSKS. An ATP-binding site is contributed by Lys-596. The Zn(2+) site is built by Cys-888, Cys-891, Cys-908, and Cys-911.

Belongs to the class-I aminoacyl-tRNA synthetase family. IleS type 1 subfamily. As to quaternary structure, monomer. Zn(2+) is required as a cofactor.

Its subcellular location is the cytoplasm. It carries out the reaction tRNA(Ile) + L-isoleucine + ATP = L-isoleucyl-tRNA(Ile) + AMP + diphosphate. Functionally, catalyzes the attachment of isoleucine to tRNA(Ile). As IleRS can inadvertently accommodate and process structurally similar amino acids such as valine, to avoid such errors it has two additional distinct tRNA(Ile)-dependent editing activities. One activity is designated as 'pretransfer' editing and involves the hydrolysis of activated Val-AMP. The other activity is designated 'posttransfer' editing and involves deacylation of mischarged Val-tRNA(Ile). This chain is Isoleucine--tRNA ligase 1, found in Bacillus cereus (strain ATCC 10987 / NRS 248).